The chain runs to 503 residues: ATP-dependent RNA helicase dbp3 (503 aa).

A compositionally biased stretch (basic and acidic residues) spans 1 to 13 (MGKRVSHNEGADR). The segment at 1–37 (MGKRVSHNEGADRRPKKKAKNEKPEKETMESPAADVT) is disordered. A Q motif motif is present at residues 104 to 112 (SFASPTPIQ). The region spanning 116–292 (WPLLFAGRDV…ATFMTSAVTV (177 aa)) is the Helicase ATP-binding domain. An ATP-binding site is contributed by 129–136 (AETGSGKT). The DEAD box signature appears at 239–242 (DEAD). The Helicase C-terminal domain maps to 323-472 (RLVQLLSENQ…EVPQELLKFG (150 aa)).

The protein belongs to the DEAD box helicase family. DDX5/DBP2 subfamily.

It is found in the nucleus. The protein localises to the nucleolus. It carries out the reaction ATP + H2O = ADP + phosphate + H(+). ATP-dependent RNA helicase required for 60S ribosomal subunit synthesis. Involved in efficient pre-rRNA processing, predominantly at site A3, which is necessary for the normal formation of 25S and 5.8S rRNAs. The chain is ATP-dependent RNA helicase dbp3 (dbp3) from Aspergillus clavatus (strain ATCC 1007 / CBS 513.65 / DSM 816 / NCTC 3887 / NRRL 1 / QM 1276 / 107).